Here is a 356-residue protein sequence, read N- to C-terminus: Protein-glutamate methylesterase/protein-glutamine glutaminase 4 (356 aa).

The Response regulatory domain occupies 15–132 (RVLVVDDSAV…SVGEMTADLV (118 aa)). Asp66 bears the 4-aspartylphosphate mark. One can recognise a CheB-type methylesterase domain in the interval 162-348 (ARTTLQVVAI…PLDRIAPEIL (187 aa)). Active-site residues include Ser174, His200, and Asp296.

The protein belongs to the CheB family. Post-translationally, phosphorylated by CheA. Phosphorylation of the N-terminal regulatory domain activates the methylesterase activity.

It localises to the cytoplasm. The enzyme catalyses [protein]-L-glutamate 5-O-methyl ester + H2O = L-glutamyl-[protein] + methanol + H(+). It carries out the reaction L-glutaminyl-[protein] + H2O = L-glutamyl-[protein] + NH4(+). Functionally, involved in chemotaxis. Part of a chemotaxis signal transduction system that modulates chemotaxis in response to various stimuli. Catalyzes the demethylation of specific methylglutamate residues introduced into the chemoreceptors (methyl-accepting chemotaxis proteins or MCP) by CheR. Also mediates the irreversible deamidation of specific glutamine residues to glutamic acid. In Anaeromyxobacter dehalogenans (strain 2CP-C), this protein is Protein-glutamate methylesterase/protein-glutamine glutaminase 4.